The primary structure comprises 943 residues: Protein translocase subunit SecA (943 aa).

Residues Gln77, 95-99 (GEGKT), and Asp484 each bind ATP.

Belongs to the SecA family. In terms of assembly, monomer and homodimer. Part of the essential Sec protein translocation apparatus which comprises SecA, SecYEG and auxiliary proteins SecDF. Other proteins may also be involved.

Its subcellular location is the cell membrane. It localises to the cytoplasm. It carries out the reaction ATP + H2O + cellular proteinSide 1 = ADP + phosphate + cellular proteinSide 2.. Its function is as follows. Part of the Sec protein translocase complex. Interacts with the SecYEG preprotein conducting channel. Has a central role in coupling the hydrolysis of ATP to the transfer of proteins into and across the cell membrane, serving as an ATP-driven molecular motor driving the stepwise translocation of polypeptide chains across the membrane. The protein is Protein translocase subunit SecA of Mesoplasma florum (strain ATCC 33453 / NBRC 100688 / NCTC 11704 / L1) (Acholeplasma florum).